We begin with the raw amino-acid sequence, 454 residues long: Bifunctional protein GlmU (454 aa).

The segment at 1–228 (MNKCAIILAA…FEETLGVNSR (228 aa)) is pyrophosphorylase. UDP-N-acetyl-alpha-D-glucosamine-binding positions include 8–11 (LAAG), Lys-22, Gln-73, and 78–79 (GT). Asp-103 contacts Mg(2+). Positions 140, 154, 169, and 226 each coordinate UDP-N-acetyl-alpha-D-glucosamine. Mg(2+) is bound at residue Asn-226. The interval 229–249 (AELAKVESIMRNRINRTHLDN) is linker. The interval 250 to 454 (GVTIIDPLNT…EGWVERKKLK (205 aa)) is N-acetyltransferase. UDP-N-acetyl-alpha-D-glucosamine contacts are provided by Arg-331 and Lys-349. His-361 functions as the Proton acceptor in the catalytic mechanism. Residues Tyr-364 and Asn-375 each coordinate UDP-N-acetyl-alpha-D-glucosamine. Acetyl-CoA contacts are provided by residues 384–385 (NY), Ala-421, and Arg-438.

The protein in the N-terminal section; belongs to the N-acetylglucosamine-1-phosphate uridyltransferase family. In the C-terminal section; belongs to the transferase hexapeptide repeat family. In terms of assembly, homotrimer. The cofactor is Mg(2+).

The protein resides in the cytoplasm. The catalysed reaction is alpha-D-glucosamine 1-phosphate + acetyl-CoA = N-acetyl-alpha-D-glucosamine 1-phosphate + CoA + H(+). It carries out the reaction N-acetyl-alpha-D-glucosamine 1-phosphate + UTP + H(+) = UDP-N-acetyl-alpha-D-glucosamine + diphosphate. It participates in nucleotide-sugar biosynthesis; UDP-N-acetyl-alpha-D-glucosamine biosynthesis; N-acetyl-alpha-D-glucosamine 1-phosphate from alpha-D-glucosamine 6-phosphate (route II): step 2/2. Its pathway is nucleotide-sugar biosynthesis; UDP-N-acetyl-alpha-D-glucosamine biosynthesis; UDP-N-acetyl-alpha-D-glucosamine from N-acetyl-alpha-D-glucosamine 1-phosphate: step 1/1. It functions in the pathway bacterial outer membrane biogenesis; LPS lipid A biosynthesis. Catalyzes the last two sequential reactions in the de novo biosynthetic pathway for UDP-N-acetylglucosamine (UDP-GlcNAc). The C-terminal domain catalyzes the transfer of acetyl group from acetyl coenzyme A to glucosamine-1-phosphate (GlcN-1-P) to produce N-acetylglucosamine-1-phosphate (GlcNAc-1-P), which is converted into UDP-GlcNAc by the transfer of uridine 5-monophosphate (from uridine 5-triphosphate), a reaction catalyzed by the N-terminal domain. In Clostridium perfringens (strain SM101 / Type A), this protein is Bifunctional protein GlmU.